The primary structure comprises 97 residues: Aspartyl/glutamyl-tRNA(Asn/Gln) amidotransferase subunit C (97 aa).

This sequence belongs to the GatC family. Heterotrimer of A, B and C subunits.

The catalysed reaction is L-glutamyl-tRNA(Gln) + L-glutamine + ATP + H2O = L-glutaminyl-tRNA(Gln) + L-glutamate + ADP + phosphate + H(+). It catalyses the reaction L-aspartyl-tRNA(Asn) + L-glutamine + ATP + H2O = L-asparaginyl-tRNA(Asn) + L-glutamate + ADP + phosphate + 2 H(+). In terms of biological role, allows the formation of correctly charged Asn-tRNA(Asn) or Gln-tRNA(Gln) through the transamidation of misacylated Asp-tRNA(Asn) or Glu-tRNA(Gln) in organisms which lack either or both of asparaginyl-tRNA or glutaminyl-tRNA synthetases. The reaction takes place in the presence of glutamine and ATP through an activated phospho-Asp-tRNA(Asn) or phospho-Glu-tRNA(Gln). The protein is Aspartyl/glutamyl-tRNA(Asn/Gln) amidotransferase subunit C of Prochlorococcus marinus (strain MIT 9313).